The chain runs to 197 residues: Peptide deformylase (197 aa).

Positions 106 and 148 each coordinate Fe cation. The active site involves Glu149. His152 is a binding site for Fe cation.

Belongs to the polypeptide deformylase family. Fe(2+) serves as cofactor.

It carries out the reaction N-terminal N-formyl-L-methionyl-[peptide] + H2O = N-terminal L-methionyl-[peptide] + formate. Functionally, removes the formyl group from the N-terminal Met of newly synthesized proteins. Requires at least a dipeptide for an efficient rate of reaction. N-terminal L-methionine is a prerequisite for activity but the enzyme has broad specificity at other positions. The sequence is that of Peptide deformylase from Mycolicibacterium vanbaalenii (strain DSM 7251 / JCM 13017 / BCRC 16820 / KCTC 9966 / NRRL B-24157 / PYR-1) (Mycobacterium vanbaalenii).